A 483-amino-acid polypeptide reads, in one-letter code: Peroxisomal biogenesis factor 3 (483 aa).

Residues 1–14 (MTGNRSLVQRHRKK) are Peroxisomal-facing. The helical transmembrane segment at 15–35 (FVVSSVLFATLFATCAITVYF) threads the bilayer. At 36–483 (SKRWLYKQHL…SACVYSNFGL (448 aa)) the chain is on the cytoplasmic side. Disordered stretches follow at residues 119–149 (GLSSGMSAMTPAPSVSAKSPQSADTTSVSET) and 230–253 (NNLPSEKADPRNSDGTIDTDTRSI). The span at 242-253 (SDGTIDTDTRSI) shows a compositional bias: polar residues.

The protein belongs to the peroxin-3 family.

The protein resides in the peroxisome membrane. Involved in peroxisome biosynthesis. The polypeptide is Peroxisomal biogenesis factor 3 (PEX3) (Kluyveromyces lactis (strain ATCC 8585 / CBS 2359 / DSM 70799 / NBRC 1267 / NRRL Y-1140 / WM37) (Yeast)).